The following is a 379-amino-acid chain: Succinyl-diaminopimelate desuccinylase (379 aa).

His-70 is a Zn(2+) binding site. Asp-72 is an active-site residue. Asp-103 lines the Zn(2+) pocket. Residue Glu-137 is the Proton acceptor of the active site. Zn(2+)-binding residues include Glu-138, Glu-166, and His-352.

It belongs to the peptidase M20A family. DapE subfamily. In terms of assembly, homodimer. The cofactor is Zn(2+). Co(2+) is required as a cofactor.

The catalysed reaction is N-succinyl-(2S,6S)-2,6-diaminopimelate + H2O = (2S,6S)-2,6-diaminopimelate + succinate. The protein operates within amino-acid biosynthesis; L-lysine biosynthesis via DAP pathway; LL-2,6-diaminopimelate from (S)-tetrahydrodipicolinate (succinylase route): step 3/3. Functionally, catalyzes the hydrolysis of N-succinyl-L,L-diaminopimelic acid (SDAP), forming succinate and LL-2,6-diaminopimelate (DAP), an intermediate involved in the bacterial biosynthesis of lysine and meso-diaminopimelic acid, an essential component of bacterial cell walls. This is Succinyl-diaminopimelate desuccinylase from Burkholderia ambifaria (strain ATCC BAA-244 / DSM 16087 / CCUG 44356 / LMG 19182 / AMMD) (Burkholderia cepacia (strain AMMD)).